The chain runs to 617 residues: Proline--tRNA ligase (617 aa).

The protein belongs to the class-II aminoacyl-tRNA synthetase family. ProS type 1 subfamily. Homodimer.

Its subcellular location is the cytoplasm. It carries out the reaction tRNA(Pro) + L-proline + ATP = L-prolyl-tRNA(Pro) + AMP + diphosphate. Functionally, catalyzes the attachment of proline to tRNA(Pro) in a two-step reaction: proline is first activated by ATP to form Pro-AMP and then transferred to the acceptor end of tRNA(Pro). As ProRS can inadvertently accommodate and process non-cognate amino acids such as alanine and cysteine, to avoid such errors it has two additional distinct editing activities against alanine. One activity is designated as 'pretransfer' editing and involves the tRNA(Pro)-independent hydrolysis of activated Ala-AMP. The other activity is designated 'posttransfer' editing and involves deacylation of mischarged Ala-tRNA(Pro). The misacylated Cys-tRNA(Pro) is not edited by ProRS. This is Proline--tRNA ligase from Streptococcus pneumoniae serotype 19F (strain G54).